Consider the following 323-residue polypeptide: Elongation factor P--(R)-beta-lysine ligase (323 aa).

Substrate is bound at residue 74–76 (SPE). Residues 98–100 (RNE) and N107 each bind ATP. Y116 provides a ligand contact to substrate. Position 242-243 (242-243 (EL)) interacts with ATP. E249 contacts substrate. ATP is bound at residue G298.

This sequence belongs to the class-II aminoacyl-tRNA synthetase family. EpmA subfamily. In terms of assembly, homodimer.

It carries out the reaction D-beta-lysine + L-lysyl-[protein] + ATP = N(6)-((3R)-3,6-diaminohexanoyl)-L-lysyl-[protein] + AMP + diphosphate + H(+). With EpmB is involved in the beta-lysylation step of the post-translational modification of translation elongation factor P (EF-P). Catalyzes the ATP-dependent activation of (R)-beta-lysine produced by EpmB, forming a lysyl-adenylate, from which the beta-lysyl moiety is then transferred to the epsilon-amino group of a conserved specific lysine residue in EF-P. This Vibrio vulnificus (strain YJ016) protein is Elongation factor P--(R)-beta-lysine ligase.